A 272-amino-acid chain; its full sequence is Bis(5'-nucleosyl)-tetraphosphatase, symmetrical (272 aa).

This sequence belongs to the Ap4A hydrolase family.

The catalysed reaction is P(1),P(4)-bis(5'-adenosyl) tetraphosphate + H2O = 2 ADP + 2 H(+). In terms of biological role, hydrolyzes diadenosine 5',5'''-P1,P4-tetraphosphate to yield ADP. In Shewanella frigidimarina (strain NCIMB 400), this protein is Bis(5'-nucleosyl)-tetraphosphatase, symmetrical.